The sequence spans 114 residues: Transmembrane protein 14B (114 aa).

A run of 4 helical transmembrane segments spans residues 8–28 (LVPLHWFGFGYTALVVSGGIV), 34–54 (GSVPSLAAGLLFGSLAGLGAY), 60–80 (PRNVWGFLAATSVTFVGVMGM), and 83–103 (YYYGKFMPVGLIAGASLLMAA).

This sequence belongs to the TMEM14 family. As to quaternary structure, interacts with IQGAP1; this interaction promotes phosphorylation and nuclear translocation of IQGAP1. As to expression, mainly expressed in the outer subventricular zone (OSVZ) of the fetal brains.

It is found in the membrane. In terms of biological role, primate-specific protein involved in cortical expansion and folding in the developing neocortex. May drive neural progenitor proliferation through nuclear translocation of IQGAP1, which in turn promotes G1/S cell cycle transitions. The sequence is that of Transmembrane protein 14B (TMEM14B) from Homo sapiens (Human).